Here is a 275-residue protein sequence, read N- to C-terminus: Expansin-A23 (275 aa).

Residues methionine 1–glycine 27 form the signal peptide. The 111-residue stretch at glutamine 72–glycine 182 folds into the Expansin-like EG45 domain. The Expansin-like CBD domain occupies tyrosine 192–glycine 271.

It belongs to the expansin family. Expansin A subfamily.

The protein localises to the secreted. Its subcellular location is the cell wall. It is found in the membrane. In terms of biological role, causes loosening and extension of plant cell walls by disrupting non-covalent bonding between cellulose microfibrils and matrix glucans. No enzymatic activity has been found. In Arabidopsis thaliana (Mouse-ear cress), this protein is Expansin-A23 (EXPA23).